The following is a 157-amino-acid chain: Small ribosomal subunit protein uS7 (157 aa).

Belongs to the universal ribosomal protein uS7 family. Part of the 30S ribosomal subunit. Contacts proteins S9 and S11.

Its function is as follows. One of the primary rRNA binding proteins, it binds directly to 16S rRNA where it nucleates assembly of the head domain of the 30S subunit. Is located at the subunit interface close to the decoding center, probably blocks exit of the E-site tRNA. The chain is Small ribosomal subunit protein uS7 from Marinomonas sp. (strain MWYL1).